The chain runs to 399 residues: MALEVRRMEGDVEDGELSDSDSDMPGAGSPRERQQKSNDGSNAGRPFQSSISSGVPDVPYRTTKSVDSSDESFSESDDDSSLWKRKRQKCFNFPPAKCEPFPLNQSHAKQTALGGKKVNNIWGMVLQEQNQDAVATELGILGMDGSIDRSRQSETYNYLLAKKLMKEAQQKEAETLDKELDEYMHDDKKTLPAEEENGQGFLKRKRSVKDRLGERQEMKYKGRYEITEEDSEEKVADEIAYRLCEPKKDLIARVVKIIGKRKAIELLMETAEVEQNGGLFIVNGTRRRTPGGVYLNLLKNTPSIKEEQIKEIFYLENQKEYENKKAAKKRRIQVLGKKMKKAIKGLNLQEYDDASRETFASDTNEALASLDDLQDGHHEAKMEHEDIIEIDNAHDLEIF.

Over residues 1–10 the composition is skewed to basic and acidic residues; that stretch reads MALEVRRMEG. A disordered region spans residues 1–83; sequence MALEVRRMEG…SESDDDSSLW (83 aa). A compositionally biased stretch (acidic residues) spans 11–22; the sequence is DVEDGELSDSDS. A compositionally biased stretch (polar residues) spans 37–53; sequence SNDGSNAGRPFQSSISS. Over residues 68-80 the composition is skewed to acidic residues; sequence SSDESFSESDDDS.

It belongs to the PHAX family.

The protein localises to the nucleus. The protein resides in the cytoplasm. In terms of biological role, probably involved in protein and RNA export from the nucleus. The protein is Phosphorylated adapter RNA export protein (PHAX) of Gallus gallus (Chicken).